A 433-amino-acid polypeptide reads, in one-letter code: 4-hydroxy-3-methylbut-2-en-1-yl diphosphate synthase (flavodoxin) (433 aa).

The span at methionine 1–proline 10 shows a compositional bias: polar residues. The segment at methionine 1–arginine 24 is disordered. [4Fe-4S] cluster-binding residues include cysteine 320, cysteine 323, cysteine 366, and glutamate 373.

The protein belongs to the IspG family. [4Fe-4S] cluster serves as cofactor.

It catalyses the reaction (2E)-4-hydroxy-3-methylbut-2-enyl diphosphate + oxidized [flavodoxin] + H2O + 2 H(+) = 2-C-methyl-D-erythritol 2,4-cyclic diphosphate + reduced [flavodoxin]. Its pathway is isoprenoid biosynthesis; isopentenyl diphosphate biosynthesis via DXP pathway; isopentenyl diphosphate from 1-deoxy-D-xylulose 5-phosphate: step 5/6. Converts 2C-methyl-D-erythritol 2,4-cyclodiphosphate (ME-2,4cPP) into 1-hydroxy-2-methyl-2-(E)-butenyl 4-diphosphate. The polypeptide is 4-hydroxy-3-methylbut-2-en-1-yl diphosphate synthase (flavodoxin) (Bordetella bronchiseptica (strain ATCC BAA-588 / NCTC 13252 / RB50) (Alcaligenes bronchisepticus)).